Here is a 385-residue protein sequence, read N- to C-terminus: Glycine/sarcosine/betaine reductase complex component C subunit alpha (385 aa).

Residue C359 is part of the active site.

As to quaternary structure, heterooctamer of four alpha and four beta subunits. Component of the glycine, sarcosine and betaine reductase complexes, together with proteins A and B.

It catalyses the reaction acetyl phosphate + [thioredoxin]-disulfide + NH4(+) + H2O = [thioredoxin]-dithiol + glycine + phosphate + H(+). The catalysed reaction is acetyl phosphate + methylamine + [thioredoxin]-disulfide + H2O = sarcosine + [thioredoxin]-dithiol + phosphate + H(+). It carries out the reaction acetyl phosphate + trimethylamine + [thioredoxin]-disulfide + H2O = glycine betaine + [thioredoxin]-dithiol + phosphate + H(+). Its function is as follows. In the first step of glycine, betaine and sarcosine reductases, the substrate is bound to component PB via a Schiff base intermediate. Then the PB-activated substrate is nucleophilically attacked by the selenol anion of component PA to transform it to a carboxymethylated selenoether and the respective amine. By action of component PC, acetyl phosphate is formed, leaving component PA in its oxidized state. Finally component PA becomes reduced by the thioredoxin system to start a new catalytic cycle of reductive deamination. The protein is Glycine/sarcosine/betaine reductase complex component C subunit alpha (grdD) of Peptoclostridium acidaminophilum (Eubacterium acidaminophilum).